A 30-amino-acid chain; its full sequence is Snaclec coagulation factor IX/factor X-binding protein subunit A (30 aa).

One can recognise a C-type lectin domain in the interval 1–30 (DCPSDWSPYEGHCYKHFIKWMNNEDAERFC). Residues C2 and C13 are joined by a disulfide bond.

This sequence belongs to the snaclec family. In terms of assembly, heterodimer of subunits A and B; disulfide-linked. Expressed by the venom gland.

Its subcellular location is the secreted. Functionally, anticoagulant protein which binds to the gamma-carboxyglutamic acid-domain regions of factors IX (F9) and factor X (F10) in the presence of calcium with a 1 to 1 stoichiometry. The polypeptide is Snaclec coagulation factor IX/factor X-binding protein subunit A (Bothrops jararaca (Jararaca)).